Here is a 318-residue protein sequence, read N- to C-terminus: tRNA-modifying protein YgfZ (318 aa).

Positions 24 and 185 each coordinate folate.

This sequence belongs to the tRNA-modifying YgfZ family.

Its subcellular location is the cytoplasm. Functionally, folate-binding protein involved in regulating the level of ATP-DnaA and in the modification of some tRNAs. It is probably a key factor in regulatory networks that act via tRNA modification, such as initiation of chromosomal replication. This chain is tRNA-modifying protein YgfZ, found in Buchnera aphidicola subsp. Baizongia pistaciae (strain Bp).